The chain runs to 197 residues: Probable UbiX-like flavin prenyltransferase (197 aa).

FMN-binding positions include 9-11, Ser36, 87-90, and Arg122; these read GAT and SMKT.

This sequence belongs to the UbiX/PAD1 family. YclB subfamily. Homododecamer.

It carries out the reaction dimethylallyl phosphate + FMNH2 = prenylated FMNH2 + phosphate. In terms of biological role, involved in the non-oxidative decarboxylation and detoxification of phenolic derivatives under both aerobic and anaerobic conditions. Flavin prenyltransferase that catalyzes the synthesis of the prenylated FMN cofactor (prenyl-FMN) for phenolic acid decarboxylase. This chain is Probable UbiX-like flavin prenyltransferase, found in Escherichia coli O157:H7.